We begin with the raw amino-acid sequence, 252 residues long: Large ribosomal subunit protein uL29m (252 aa).

Lysine 146 carries the N6-acetyllysine modification.

Belongs to the universal ribosomal protein uL29 family. As to quaternary structure, component of the mitochondrial ribosome large subunit (39S) which comprises a 16S rRNA and about 50 distinct proteins.

The protein localises to the mitochondrion. This Bos taurus (Bovine) protein is Large ribosomal subunit protein uL29m (MRPL47).